Here is a 113-residue protein sequence, read N- to C-terminus: Large ribosomal subunit protein uL22 (113 aa).

It belongs to the universal ribosomal protein uL22 family. In terms of assembly, part of the 50S ribosomal subunit.

This protein binds specifically to 23S rRNA; its binding is stimulated by other ribosomal proteins, e.g. L4, L17, and L20. It is important during the early stages of 50S assembly. It makes multiple contacts with different domains of the 23S rRNA in the assembled 50S subunit and ribosome. Its function is as follows. The globular domain of the protein is located near the polypeptide exit tunnel on the outside of the subunit, while an extended beta-hairpin is found that lines the wall of the exit tunnel in the center of the 70S ribosome. This is Large ribosomal subunit protein uL22 from Anoxybacillus flavithermus (strain DSM 21510 / WK1).